The sequence spans 348 residues: MNDRQAALDQALKQIEKQFGKGSIMKLGEHSDQNISTISSGSLALDIALGVGGYPRGRIIEVYGPESSGKTTVALHAIAEVQAQGGTAAFIDAEHALDPAYAKNLGVNIDELLLSQPDTGEQALEIAEALVRSGAVDMLVIDSVAALVPRAEIEGEMGDAHVGLQARLMSQALRKLSGAINKSKTIAIFINQIREKVGVMFGNPEITPGGRALKFYSTVRLEVRRAEQLKQGTDVMGNKTKIKVVKNKVAPPFRIAEVDIMYGEGISREGELVDMAAEVDVINKSGSWYSYKEERIGQGRENAKQYLKEHTDIRDEISKRVREEYEIDGASKEPLEETEETLSLLDDE.

64 to 71 is an ATP binding site; sequence GPESSGKT. Over residues 325–335 the composition is skewed to basic and acidic residues; it reads YEIDGASKEPL. A disordered region spans residues 325 to 348; that stretch reads YEIDGASKEPLEETEETLSLLDDE. Over residues 336–348 the composition is skewed to acidic residues; sequence EETEETLSLLDDE.

This sequence belongs to the RecA family.

The protein resides in the cytoplasm. In terms of biological role, can catalyze the hydrolysis of ATP in the presence of single-stranded DNA, the ATP-dependent uptake of single-stranded DNA by duplex DNA, and the ATP-dependent hybridization of homologous single-stranded DNAs. It interacts with LexA causing its activation and leading to its autocatalytic cleavage. The polypeptide is Protein RecA (Listeria seeligeri).